A 254-amino-acid polypeptide reads, in one-letter code: MAIANKNIIFVAGLGGIGLDTSREIVKSGPKNLVILDRIDNPTAIAELKAINPKVTVTFYPYDVTVPVAETTKLLKTIFAQLKTVDLLINGAGILDDHQIERTIAVNFTGTVNTTTAIMEFWDKRKGGPGGVIANICSVTGFNAIYQVPVYSASKAAALSFTNSLARLAPITGVTAYSINPGITRTPLVHKFNSWLDVEPRVGELLLEHPTQTTLECAQNFVKAIEANKNGAIWQLDLGQLIAVEWTKHWDSHI.

10 to 33 (FVAGLGGIGLDTSREIVKSGPKNL) contributes to the NAD(+) binding site. S138 lines the substrate pocket. The Proton acceptor role is filled by Y151.

Belongs to the short-chain dehydrogenases/reductases (SDR) family. As to quaternary structure, homodimer.

The catalysed reaction is a primary alcohol + NAD(+) = an aldehyde + NADH + H(+). The enzyme catalyses a secondary alcohol + NAD(+) = a ketone + NADH + H(+). This Drosophila montana (Fruit fly) protein is Alcohol dehydrogenase 2 (Adh2).